A 430-amino-acid polypeptide reads, in one-letter code: Dihydrolipoyllysine-residue acetyltransferase component of pyruvate dehydrogenase complex (430 aa).

Residues 2 to 77 form the Lipoyl-binding domain; the sequence is AFEFRLPDIG…VVGDVIVKID (76 aa). At lysine 43 the chain carries N6-lipoyllysine. The segment at 80–122 is disordered; that stretch reads DAEDMQFKGHDDDSSSKEEPAKEEAPAEQAPVATQTEEVDENR. Residues 84–104 show a composition bias toward basic and acidic residues; sequence MQFKGHDDDSSSKEEPAKEEA. The Peripheral subunit-binding (PSBD) domain maps to 125 to 162; it reads KAMPSVRKYAREKGVNIKAVSGSGKNGRITKEDVDAYL. The interval 165–200 is disordered; sequence GAPTASNESAASATSEEVAETPAAPAAVTLEGDFPE. The segment covering 166-193 has biased composition (low complexity); that stretch reads APTASNESAASATSEEVAETPAAPAAVT. Residue histidine 401 is part of the active site.

It belongs to the 2-oxoacid dehydrogenase family. As to quaternary structure, forms a 24-polypeptide structural core with octahedral symmetry. It depends on (R)-lipoate as a cofactor.

It catalyses the reaction N(6)-[(R)-dihydrolipoyl]-L-lysyl-[protein] + acetyl-CoA = N(6)-[(R)-S(8)-acetyldihydrolipoyl]-L-lysyl-[protein] + CoA. The pyruvate dehydrogenase complex catalyzes the overall conversion of pyruvate to acetyl-CoA and CO(2). It contains multiple copies of three enzymatic components: pyruvate dehydrogenase (E1), dihydrolipoamide acetyltransferase (E2) and lipoamide dehydrogenase (E3). This Staphylococcus aureus (strain COL) protein is Dihydrolipoyllysine-residue acetyltransferase component of pyruvate dehydrogenase complex (pdhC).